We begin with the raw amino-acid sequence, 1906 residues long: Myosin light chain kinase, smooth muscle (1906 aa).

2 Ig-like C2-type domains span residues 28–117 and 156–244; these read PAFT…VELT and PKFA…AELT. Disordered regions lie at residues 127-157 and 309-453; these read SLPS…SPPK and ETFY…SKVS. A compositionally biased stretch (basic and acidic residues) spans 309-321; that stretch reads ETFYTSREAKDGK. 2 stretches are compositionally biased toward polar residues: residues 345 to 354 and 384 to 402; these read LQKTSSTITL and PLMT…QVSP. Positions 403–424 are enriched in basic and acidic residues; that stretch reads RSRETENRAGVRKSVKEEKREP. Ig-like C2-type domains follow at residues 429-517, 521-613, 637-725, and 735-830; these read PQFE…WLLT, PKVE…AQVT, PIFL…ATLT, and PWFI…SSAS. Residues 660–676 form an IIA-1 repeat; sequence VSANPCPEIIWLHNGKE. Residues 660-1833 form a 4 X repeats, motif IIA region; that stretch reads VSANPCPEII…EVMWYKDDQP (1174 aa). One copy of the IIB-1 repeat lies at 693-708; it reads SLYIQEVFPEDTGKYT. Residues 693 to 1866 form a 5 X repeats, motif IIB region; sequence SLYIQEVFPE…VCGDDDAKYT (1174 aa). The stretch at 758 to 774 is one IIA-2 repeat; the sequence is IAGDPFPTVHWFKDGQE. Residues 791 to 807 form an IIB-2 repeat; that stretch reads TLILRNVQSRHAGQYEI. 2 disordered regions span residues 831–881 and 947–1086; these read RAEM…QEDV and PKTL…APSF. 2 stretches are compositionally biased toward basic and acidic residues: residues 833-850 and 867-881; these read EMLR…RRDG and SSSE…QEDV. An III-1 repeat occupies 970–987; the sequence is AKKGTPKTPLPEKVPPPK. The segment at 970 to 1226 is 4 X repeats, motif III; sequence AKKGTPKTPL…TPPKAATPPQ (257 aa). Over residues 977 to 988 the composition is skewed to pro residues; it reads TPLPEKVPPPKP. An III-2 repeat occupies 999 to 1016; that stretch reads AKKKPPAENGSASTPAPN. Residues 1039-1051 are compositionally biased toward basic and acidic residues; sequence VKKEEKNDRKCEH. An III-3 repeat occupies 1061-1078; it reads IGKKAENKPAASKPTPPP. 2 consecutive Ig-like C2-type domains span residues 1084–1172 and 1225–1313; these read PSFT…CKVL and PQIT…VNLT. The stretch at 1107-1123 is one IIA-3 repeat; sequence ISSDPPASVSWTLDSKA. An IIB-3 repeat occupies 1140–1156; sequence SLTIEKVMPEDGGEYKC. Residues 1180 to 1227 form a disordered region; that stretch reads KAAKPAEKKTKKPKTTLPPVLSTESSEATVKKKPAPKTPPKAATPPQI. The III-4 repeat unit spans residues 1209 to 1226; it reads VKKKPAPKTPPKAATPPQ. One copy of the IIB-4 repeat lies at 1281-1297; sequence KLTISSTKQEHCGCYTL. The segment at 1317–1364 is motif IA; that stretch reads KPDPPAGTPCASDIRSSSLTLSWYGSSYDGGSAVQSYTVEIWNSVDNK. The Fibronectin type-III domain occupies 1321–1414; it reads PAGTPCASDI…ESEVVKVGEK (94 aa). Residues 1385–1402 are motif IB; that stretch reads REYKFRVRAANVYGISEP. Positions 1414-1433 are disordered; the sequence is KQEEELKEEEAELSDDEGKE. Positions 1415 to 1432 are enriched in acidic residues; that stretch reads QEEELKEEEAELSDDEGK. In terms of domain architecture, Protein kinase spans 1453-1708; the sequence is YNIEERLGSG…CTQCLQHPWL (256 aa). ATP contacts are provided by residues 1459-1467 and lysine 1482; that span reads LGSGKFGQV. Residue aspartate 1574 is the Proton acceptor of the active site. Residues 1700–1763 form a calmodulin-binding region; it reads TQCLQHPWLQ…SGMSGRKASG (64 aa). Residues 1716–1728 are calmodulin autoinhibition (AM13) region; it reads EAKKLSKDRMKKY. A calmodulin recognition (RS20) region region spans residues 1730–1749; that stretch reads ARRKWQKTGHAVRAIGRLSS. Residue serine 1762 is modified to Phosphoserine; by PKG. Serine 1768 is subject to Phosphoserine; by MAPK. The Ig-like C2-type 9 domain maps to 1794 to 1885; it reads PYFTKTILDM…ATCTAELLVE (92 aa). An IIA-4 repeat occupies 1817-1833; sequence IEGYPDPEVMWYKDDQP. An IIB-5 repeat occupies 1851–1866; sequence SLTISEVCGDDDAKYT. A disordered region spans residues 1885-1906; sequence ETMGKEGEGEGEGEEDEEEEEE. Positions 1893–1906 are enriched in acidic residues; sequence GEGEGEEDEEEEEE.

It belongs to the protein kinase superfamily. CAMK Ser/Thr protein kinase family. As to quaternary structure, all isoforms including Telokin bind calmodulin. The cofactor is Mg(2+). Ca(2+) serves as cofactor. In terms of processing, the C-terminus is deglutamylated, leading to the formation of Myosin light chain kinase, smooth muscle, deglutamylated form. The C-terminus is variable, with one to five C-terminal glutamyl residues being removed producing five forms differring in their number of C-terminal glutamyl residues. Post-translationally, acetylated. Phosphorylation of telokin by PKG has no significant effect on its myosin binding activity, but promotes translocation to the membrane. As to expression, isoform telokin is expressed in gizzard, heart, lung, intestine, and skeletal muscle although the levels of the expression in the latter were much less than that in the gizzard.

Its subcellular location is the cytoplasm. The protein localises to the cytosol. It localises to the membrane. It catalyses the reaction L-seryl-[myosin light chain] + ATP = O-phospho-L-seryl-[myosin light chain] + ADP + H(+). The enzyme catalyses L-threonyl-[myosin light chain] + ATP = O-phospho-L-threonyl-[myosin light chain] + ADP + H(+). Activated by phosphorylation on Tyr-478. Isoforms which lack this tyrosine residue are not regulated in this way. All catalytically active isoforms require binding to calcium and calmodulin for activation. Its function is as follows. Phosphorylates a specific serine in the N-terminus of a myosin light chain, which leads to the formation of calmodulin/MLCK signal transduction complexes which allow selective transduction of calcium signals. In Gallus gallus (Chicken), this protein is Myosin light chain kinase, smooth muscle (Mylk).